The primary structure comprises 518 residues: Type II methyltransferase M.HindII (518 aa).

It belongs to the N(4)/N(6)-methyltransferase family.

It catalyses the reaction a 2'-deoxyadenosine in DNA + S-adenosyl-L-methionine = an N(6)-methyl-2'-deoxyadenosine in DNA + S-adenosyl-L-homocysteine + H(+). A gamma subtype methylase, recognizes the double-stranded sequence 5'-GTYRAC-3', methylates A-5 on both strands, and protects the DNA from cleavage by the HindII endonuclease. This Haemophilus influenzae (strain ATCC 51907 / DSM 11121 / KW20 / Rd) protein is Type II methyltransferase M.HindII (hindIIM).